Consider the following 120-residue polypeptide: UPF0231 protein YacL (120 aa).

Belongs to the UPF0231 family.

This chain is UPF0231 protein YacL (yacL), found in Shigella flexneri.